Reading from the N-terminus, the 1110-residue chain is Nonribisomal peptide synthetase benY (1110 aa).

Residues 47-443 (RALEFPEKIA…GRKDHQLKVR (397 aa)) are adenylation. Residues 575–651 (TLETESEKIL…EMAQSARVVP (77 aa)) enclose the Carrier domain. The residue at position 612 (Ser-612) is an O-(pantetheine 4'-phosphoryl)serine. The tract at residues 713–1025 (YILDGDVDFD…IFHHQNIDTK (313 aa)) is condensation.

This sequence belongs to the NRP synthetase family.

It participates in secondary metabolite biosynthesis. Functionally, nonribisomal peptide synthetase; part of the gene cluster that mediates the biosynthesis of benzomalvin A and D. The pathway begins with the loading of amino acid precursors onto the A domains of the non ribosomal peptide synthetases benY and benZ. BenY and the A1 domain of benZ are loaded with anthranilate (Anth), while the A2 domain of benZ is loaded with phenylalanine (Phe). N-methylation of Phe by the methyltransferase benX may happen before loading of Phe onto benZ, after loading of Phe, or after dipeptide formation. Condensation of Anth with the secondary amine of NmPhe or Phe is catalyzed by the C1 domain of benZ, forming a dipeptide intermediate. This is followed by in trans condensation of the Anth-NmPhe dipeptide with Anth bound to the T domain of benY by the C2 domain of benZ to form the linear tripeptide Anth-NmPhe-Anth. Cyclization and release of the tripeptide is then catalyzed by the C-terminal C domain of benY and the resulting 11-member macrocyclic intermediate is expected to spontaneously collapse to form the benzodiazepine core. Benzomalvin A is in conformational equilibrium with its atropisomer, benzomalvin D. The chain is Nonribisomal peptide synthetase benY from Aspergillus terreus.